The primary structure comprises 242 residues: uncharacterized protein (242 aa).

Residues 1–11 (MNFEAASAPSQ) show a composition bias toward low complexity. The segment at 1–45 (MNFEAASAPSQQPSPTPAPKTEEPKENGGSEQQADQPENSKKDDV) is disordered.

The protein to U.parvum UU171.

This is an uncharacterized protein from Ureaplasma parvum serovar 3 (strain ATCC 700970).